A 465-amino-acid chain; its full sequence is Cytochrome P450 85A1 (465 aa).

Residues 2 to 22 traverse the membrane as a helical segment; that stretch reads GAMMVMMGLLLIIVSLCSALL. Residue Cys415 participates in heme binding.

It belongs to the cytochrome P450 family. The cofactor is heme. As to expression, mainly expressed in apical shoots, hypocotyls, siliques and roots. Also present in the female gametophyte.

It localises to the membrane. The enzyme catalyses 6-deoxoteasterone + reduced [NADPH--hemoprotein reductase] + O2 = 6alpha-hydroxyteasterone + oxidized [NADPH--hemoprotein reductase] + H2O + H(+). It carries out the reaction 6alpha-hydroxytyphasterol + reduced [NADPH--hemoprotein reductase] + O2 = teasterone + oxidized [NADPH--hemoprotein reductase] + 2 H2O + H(+). It catalyses the reaction 3-dehydro-6-deoxoteasterone + reduced [NADPH--hemoprotein reductase] + O2 = 3-dehydro-6alpha-hydroxyteasterone + oxidized [NADPH--hemoprotein reductase] + H2O + H(+). The catalysed reaction is 3-dehydro-6alpha-hydroxyteasterone + reduced [NADPH--hemoprotein reductase] + O2 = 3-dehydroteasterone + oxidized [NADPH--hemoprotein reductase] + 2 H2O + H(+). The enzyme catalyses 6-deoxotyphasterol + reduced [NADPH--hemoprotein reductase] + O2 = 6alpha-hydroxytyphasterol + oxidized [NADPH--hemoprotein reductase] + H2O + H(+). It carries out the reaction 6alpha-hydroxytyphasterol + reduced [NADPH--hemoprotein reductase] + O2 = typhasterol + oxidized [NADPH--hemoprotein reductase] + 2 H2O + H(+). It catalyses the reaction 6-deoxocastasterone + reduced [NADPH--hemoprotein reductase] + O2 = 6alpha-hydroxycastasterone + oxidized [NADPH--hemoprotein reductase] + H2O + H(+). The catalysed reaction is 6alpha-hydroxycastasterone + reduced [NADPH--hemoprotein reductase] + O2 = castasterone + oxidized [NADPH--hemoprotein reductase] + 2 H2O + H(+). The enzyme catalyses 6-deoxocastasterone + 2 reduced [NADPH--hemoprotein reductase] + 2 O2 = castasterone + 2 oxidized [NADPH--hemoprotein reductase] + 3 H2O + 2 H(+). It carries out the reaction 6-deoxoteasterone + 2 reduced [NADPH--hemoprotein reductase] + 2 O2 = teasterone + 2 oxidized [NADPH--hemoprotein reductase] + 3 H2O + 2 H(+). It catalyses the reaction 6-deoxotyphasterol + 2 reduced [NADPH--hemoprotein reductase] + 2 O2 = typhasterol + 2 oxidized [NADPH--hemoprotein reductase] + 3 H2O + 2 H(+). The catalysed reaction is 3-dehydro-6-deoxoteasterone + 2 reduced [NADPH--hemoprotein reductase] + 2 O2 = 3-dehydroteasterone + 2 oxidized [NADPH--hemoprotein reductase] + 3 H2O + 2 H(+). It participates in plant hormone biosynthesis; brassinosteroid biosynthesis. In terms of biological role, catalyzes the C6-oxidation step in brassinosteroids biosynthesis. Converts 6-deoxocastasterone (6-deoxoCS) to castasterone (CS). May also convert 6-deoxoteasterone (6-deoxoTE) to teasterone (TE), 3-dehydro-6-deoxoteasterone (6-deoxo3DT, 6-deoxo-3-DHT) to 3-dehydroteasterone (3DT, 3-DHT), and 6-deoxotyphasterol (6-deoxoTY) to typhasterol (TY). Required for the initiation of female gametogenesis (megagametogenesis). This Arabidopsis thaliana (Mouse-ear cress) protein is Cytochrome P450 85A1.